Here is a 364-residue protein sequence, read N- to C-terminus: Leucine-rich repeat-containing protein 19 (364 aa).

Positions 1–20 (MKVTRFMFWLFSMLLPSVKS) are cleaved as a signal peptide. The Extracellular segment spans residues 21-264 (QASETEVPCN…SEHEPLGKSW (244 aa)). Residues Asn30, Asn35, Asn46, and Asn88 are each glycosylated (N-linked (GlcNAc...) asparagine). 6 LRR repeats span residues 44-69 (STNVTILDLSYNRITLNAADSRVLQM), 70-93 (YSLLTELYLMENNIIALYNSSFRN), 94-117 (LLNLEILNICGNSISVIQQGSFVG), 118-141 (LNELKQLFLCQNKILQLNPDTFVP), 143-163 (NNLKVLNLQGNLIRLFDAPQL), and 164-190 (PHLEILTLDGNPWNCTCGLLELHNWLN). The region spanning 174–225 (NPWNCTCGLLELHNWLNTSNVTLENENMTMCSYPDELKHDSIKSAPFTTECH) is the LRRCT domain. N-linked (GlcNAc...) asparagine glycans are attached at residues Asn177, Asn190, Asn193, Asn200, Asn241, Asn245, and Asn250. Residues 265 to 285 (AFLVGVVATVLLTSLLIFIAI) traverse the membrane as a helical segment. Residues 286 to 364 (KCPVWYNILL…IDINEVHEEK (79 aa)) lie on the Cytoplasmic side of the membrane.

Interacts with TRAF2 and TRAF6. As to expression, strongly expressed in kidney, also expressed in spleen, intestine and colon. Highly expressed in epithelial cells. In kidney, mainly expressed in renal collecting duct epithelial cells.

It localises to the membrane. Its activity is regulated as follows. Activated by TLR ligands such as LPS, bacterial DNA and peptidoglycan. In terms of biological role, pathogen-recognition receptor which mediates the activation of TRAF2- and TRAF6 NF-kappa-B signaling pathways and induces the expression of pro-inflammatory cytokines. In kidney, prevents infection by uropathogenic bacteria by inducing the production of cytokines, chemokines and antimicrobial substances. In gut, involved in host-microbiota interactions, plays a critical role in promoting the recruitment of immune cells and intestinal inflammation. The chain is Leucine-rich repeat-containing protein 19 from Mus musculus (Mouse).